The chain runs to 255 residues: F-box/SPRY domain-containing protein 1 (255 aa).

The region spanning 3-51 is the F-box domain; it reads DPVAALCNYNVLEVIFSYLELDDLSHCSQVCKSWYHFLNDENSDVWRWH. Residues 61-253 form the B30.2/SPRY domain; that stretch reads LKSDLLSSVP…VSMVYLGTPL (193 aa).

The protein belongs to the FBXO45/Fsn family. As to quaternary structure, component of an E3 ubiquitin ligase complex composed of hiw and Fsn.

It is found in the synapse. It functions in the pathway protein modification; protein ubiquitination. Functionally, required in the presynaptic motoneuron to down-regulate the levels of wnd and restrain synaptic terminal growth at the neuromuscular junction (NMJ). This Drosophila sechellia (Fruit fly) protein is F-box/SPRY domain-containing protein 1.